The sequence spans 728 residues: Histone demethylase JHD2 (728 aa).

The 44-residue stretch at 4-47 (IPALYPTEQEFKNPIDYLSNPHIKRLGVRYGMVKVVPPNGFCPP) folds into the JmjN domain. The PHD-type zinc-finger motif lies at 235-285 (DDACIVCRKTNDPKRTILCDSCDKPFHIYCLSPPLERVPSGDWICNTCIVG). The JmjC domain maps to 381–549 (KYCDHPMNLT…YGFGAITDYK (169 aa)). Residues His427, Asp430, and His517 each contribute to the Fe cation site.

It belongs to the JARID1 histone demethylase family. It depends on Fe(2+) as a cofactor.

It localises to the nucleus. The enzyme catalyses N(6),N(6),N(6)-trimethyl-L-lysyl(4)-[histone H3] + 3 2-oxoglutarate + 3 O2 = L-lysyl(4)-[histone H3] + 3 formaldehyde + 3 succinate + 3 CO2. Functionally, histone demethylase that demethylates 'Lys-4' of histone H3, thereby playing a central role in histone code. Demethylates trimethylated H3 'Lys-4'. The protein is Histone demethylase JHD2 (JHD2) of Saccharomyces cerevisiae (strain ATCC 204508 / S288c) (Baker's yeast).